A 218-amino-acid chain; its full sequence is Carnitine transport permease protein OpuCB (218 aa).

The region spanning 19–198 (TWQHLFISLS…ILALVVEFAL (180 aa)) is the ABC transmembrane type-1 domain. 5 helical membrane-spanning segments follow: residues 23–43 (LFIS…TGIL), 48–68 (PKVA…PSLA), 79–101 (VGTL…RNTF), 149–169 (VIAW…DFIF), and 179–199 (LILG…FALG).

It belongs to the binding-protein-dependent transport system permease family. As to quaternary structure, the complex is composed of two ATP-binding proteins (OpuCA), two transmembrane proteins (OpuCB and OpuCD) and a solute-binding protein (OpuCC).

The protein localises to the cell membrane. Its function is as follows. Part of the ABC transporter complex OpuCABCD involved in carnitine uptake. Probably responsible for the translocation of the substrate across the membrane. Involved, with BetL and GbuABC, in osmoprotection and cryoprotection of Listeria. This chain is Carnitine transport permease protein OpuCB (opuCB), found in Listeria monocytogenes.